Consider the following 194-residue polypeptide: Protein phosphatase 1 regulatory subunit 1B (194 aa).

The residue at position 1 (methionine 1) is an N-acetylmethionine. A disordered region spans residues 1-194; that stretch reads MDPKDRKKIQ…GEEPQHPSPP (194 aa). Threonine 34 is modified (phosphothreonine; by PKA). A compositionally biased stretch (basic and acidic residues) spans 41–63; the sequence is VSEHSSPEEEASPHQRTSGEGHH. Serine 45 and serine 46 each carry phosphoserine. A Phosphothreonine modification is found at threonine 75. Over residues 84–95 the composition is skewed to polar residues; the sequence is HLQTISNLSENQ. Phosphoserine is present on residues serine 97 and serine 130. A compositionally biased stretch (acidic residues) spans 113–131; it reads QEDDEEDEDEEEDEEEDSQ. Over residues 160-170 the composition is skewed to basic and acidic residues; the sequence is PPLDEPQRDGN. Serine 192 carries the post-translational modification Phosphoserine.

Belongs to the protein phosphatase inhibitor 1 family. Post-translationally, dopamine- and cyclic AMP-regulated neuronal phosphoprotein. Phosphorylation of Thr-34 is required for activity.

Its subcellular location is the cytoplasm. Inhibitor of protein-phosphatase 1. The polypeptide is Protein phosphatase 1 regulatory subunit 1B (Ppp1r1b) (Mus musculus (Mouse)).